Consider the following 384-residue polypeptide: F-box only protein 5-B (384 aa).

2 disordered regions span residues 1–20 (MMCGFTSNPSPKKLLSKSSA) and 79–106 (DEENSSLQDSGYSSILQNDSPCQDETDS). Residues 9–19 (PSPKKLLSKSS) show a composition bias toward low complexity. Over residues 83–99 (SSLQDSGYSSILQNDSP) the composition is skewed to polar residues. In terms of domain architecture, F-box spans 191-238 (AELFHRDFKHLLTKILRHLNAMDLINVIGVSTTWRKILQKDNWAYNTY). A ZBR-type zinc finger spans residues 311-359 (SLKACVDCGSPAKYDSYLHRAICTRESCKLDFCTLCSCKYHSSKSCLIS). The Zn(2+) site is built by cysteine 315, cysteine 318, cysteine 333, cysteine 338, cysteine 343, cysteine 346, histidine 351, and cysteine 356.

In terms of assembly, part of a SCF (SKP1-cullin-F-box) protein ligase complex. Interacts with btrc. Interacts with skp1. Interacts with cdc20. Interacts with pin1; stabilizes fbxo5 by preventing its association with btrc in an isomerization-dependent pathway; this interaction is present during G2 phase and prevents fbxo5 degradation. Interacts with plk1. In terms of processing, proteolysed; proteolysis is induced by both cyclin B-cdk1 and cyclin A-cdk1/2 complex through probable phosphorylation. Proteolysis is inhibited by pin1 during G2.

Its subcellular location is the nucleus. The protein resides in the cytoplasm. The protein localises to the cytoskeleton. It localises to the spindle. It is found in the microtubule organizing center. Its subcellular location is the centrosome. Its pathway is protein modification; protein ubiquitination. Regulates progression through early mitosis by inhibiting the anaphase promoting complex/cyclosome (APC). Binds to the APC activators cdc20 to prevent APC activation. Can also bind directly to the APC to inhibit substrate-binding. Required to arrest unfertilized eggs at metaphase of meiosis II, by preventing their release from metaphase of meiosis II, through inhibition of APC-dependent cyclin B destruction leading to stabilization of cyclin B-cdk1 complex activity. This is F-box only protein 5-B (fbxo5-b) from Xenopus laevis (African clawed frog).